We begin with the raw amino-acid sequence, 241 residues long: tRNA (guanine-N(7)-)-methyltransferase (241 aa).

S-adenosyl-L-methionine is bound by residues Glu76, Glu101, Asp128, and Asp150. Residue Asp150 is part of the active site. Substrate-binding positions include Lys154, Asp186, and 219–222 (TRYE).

The protein belongs to the class I-like SAM-binding methyltransferase superfamily. TrmB family.

It carries out the reaction guanosine(46) in tRNA + S-adenosyl-L-methionine = N(7)-methylguanosine(46) in tRNA + S-adenosyl-L-homocysteine. It participates in tRNA modification; N(7)-methylguanine-tRNA biosynthesis. Catalyzes the formation of N(7)-methylguanine at position 46 (m7G46) in tRNA. The polypeptide is tRNA (guanine-N(7)-)-methyltransferase (Cereibacter sphaeroides (strain ATCC 17023 / DSM 158 / JCM 6121 / CCUG 31486 / LMG 2827 / NBRC 12203 / NCIMB 8253 / ATH 2.4.1.) (Rhodobacter sphaeroides)).